The following is a 290-amino-acid chain: Phosphatidylserine decarboxylase proenzyme (290 aa).

Active-site charge relay system; for autoendoproteolytic cleavage activity residues include Asp96, His153, and Ser257. Residue Ser257 is the Schiff-base intermediate with substrate; via pyruvic acid; for decarboxylase activity of the active site. Ser257 is subject to Pyruvic acid (Ser); by autocatalysis.

Belongs to the phosphatidylserine decarboxylase family. PSD-B subfamily. Prokaryotic type I sub-subfamily. As to quaternary structure, heterodimer of a large membrane-associated beta subunit and a small pyruvoyl-containing alpha subunit. Pyruvate is required as a cofactor. In terms of processing, is synthesized initially as an inactive proenzyme. Formation of the active enzyme involves a self-maturation process in which the active site pyruvoyl group is generated from an internal serine residue via an autocatalytic post-translational modification. Two non-identical subunits are generated from the proenzyme in this reaction, and the pyruvate is formed at the N-terminus of the alpha chain, which is derived from the carboxyl end of the proenzyme. The autoendoproteolytic cleavage occurs by a canonical serine protease mechanism, in which the side chain hydroxyl group of the serine supplies its oxygen atom to form the C-terminus of the beta chain, while the remainder of the serine residue undergoes an oxidative deamination to produce ammonia and the pyruvoyl prosthetic group on the alpha chain. During this reaction, the Ser that is part of the protease active site of the proenzyme becomes the pyruvoyl prosthetic group, which constitutes an essential element of the active site of the mature decarboxylase.

It localises to the cell membrane. The enzyme catalyses a 1,2-diacyl-sn-glycero-3-phospho-L-serine + H(+) = a 1,2-diacyl-sn-glycero-3-phosphoethanolamine + CO2. It functions in the pathway phospholipid metabolism; phosphatidylethanolamine biosynthesis; phosphatidylethanolamine from CDP-diacylglycerol: step 2/2. Catalyzes the formation of phosphatidylethanolamine (PtdEtn) from phosphatidylserine (PtdSer). The sequence is that of Phosphatidylserine decarboxylase proenzyme from Haemophilus influenzae (strain ATCC 51907 / DSM 11121 / KW20 / Rd).